Reading from the N-terminus, the 643-residue chain is MVTSTGLLLLLGLLGQLWAGAAADSEAVVCEGTACYTAHWGKLSAAEAQHRCNENGGNLATVKSEEEARHVQEALAQLLKTKAPSETKIGKFWIGLQREKGKCTYHDLPMKGFSWVGGGEDTTYSNWYKASKSSCISKRCVSLILDLSLKPHPSHLPKWHESPCGTPDAPGNSIEGFLCKFNFKGMCSPLALGGPGQLTYTTPFQATTSSLKAVPFASVANVVCGDEAESKTNYYLCKETTAGVFHWGSSGPLCVSPKFGCSFNNGGCQQDCFEGGDGSFRCGCRPGFRLLDDLVTCASRNPCSSNPCTGGGMCHSVPLSENYTCHCPRGYQLDSSQVHCVDIDECEDSPCDQECINTPGGFHCECWVGYQSSGSKEEACEDVDECTAAYSPCAQGCTNTDGSFYCSCKEGYIMSGEDSTQCEDIDECLGNPCDTLCINTDGSFRCGCPAGFELAPNGVSCTRGSMFSELPARPPQKEDKGDGKESTVPLTEMPGSLNGSKDVSNRAQTTDLSIQSDSSTASVPLEIEVSSEASDVWLDLGTYLPTTSGHSQPTHEDSVPAHSDSDTDGQKLLLFYILGTVVAISLLLALALGLLIYLKRKAKKEEIKEKKAQNAADSYSWIPERAESRAPENQYSPTPGTDC.

The signal sequence occupies residues 1-23; the sequence is MVTSTGLLLLLGLLGQLWAGAAA. The Extracellular segment spans residues 24-571; the sequence is DSEAVVCEGT…HSDSDTDGQK (548 aa). The 143-residue stretch at 31 to 173 folds into the C-type lectin domain; sequence EGTACYTAHW…CGTPDAPGNS (143 aa). Disulfide bonds link Cys140–Cys164, Cys261–Cys272, Cys268–Cys282, Cys284–Cys297, Cys303–Cys314, Cys308–Cys325, Cys327–Cys340, Cys346–Cys355, Cys351–Cys364, Cys366–Cys380, Cys386–Cys397, Cys393–Cys406, Cys408–Cys422, Cys428–Cys437, Cys433–Cys446, and Cys448–Cys461. 2 consecutive EGF-like domains span residues 257–298 and 299–341; these read PKFG…VTCA and SRNP…VHCV. N-linked (GlcNAc...) asparagine glycosylation is present at Asn322. One can recognise an EGF-like 3; calcium-binding domain in the interval 342 to 381; the sequence is DIDECEDSPCDQECINTPGGFHCECWVGYQSSGSKEEACE. In terms of domain architecture, EGF-like 4; calcium-binding spans 382–423; that stretch reads DVDECTAAYSPCAQGCTNTDGSFYCSCKEGYIMSGEDSTQCE. Residues 424-462 form the EGF-like 5; calcium-binding domain; it reads DIDECLGNPCDTLCINTDGSFRCGCPAGFELAPNGVSCT. Positions 469–517 are disordered; it reads ELPARPPQKEDKGDGKESTVPLTEMPGSLNGSKDVSNRAQTTDLSIQSD. Positions 475–485 are enriched in basic and acidic residues; the sequence is PQKEDKGDGKE. Polar residues predominate over residues 497–517; sequence LNGSKDVSNRAQTTDLSIQSD. Asn498 carries N-linked (GlcNAc...) asparagine glycosylation. Residues 572-592 traverse the membrane as a helical segment; the sequence is LLLFYILGTVVAISLLLALAL. The Cytoplasmic segment spans residues 593-643; it reads GLLIYLKRKAKKEEIKEKKAQNAADSYSWIPERAESRAPENQYSPTPGTDC. Positions 606–643 are disordered; sequence EIKEKKAQNAADSYSWIPERAESRAPENQYSPTPGTDC. Ser618 carries the post-translational modification Phosphoserine. A phosphotyrosine mark is found at Tyr619 and Tyr635. Residues 631-643 are compositionally biased toward polar residues; the sequence is PENQYSPTPGTDC.

As to quaternary structure, homodimer. Interacts with C1QBP; the association may represent a cell surface C1q receptor. Interacts with surfactant protein A/SFTPA1. Interacts with multimerin-2/MMRN2. Interacts with DAG1; this interaction plays an important role in endothelial cell migration. Interacts with CBL. Interacts with IGFBP7. Interacts with VEGFR2. In terms of processing, N- and O-glycosylated. Post-translationally, phosphorylated on Tyr-619 and Tyr-635 by SRC; these phosphorylations promote endothelial cell adhesion and migration. As to expression, widely expressed. Highly expressed in lung and heart. Expressed at lower level in brain, thymus, liver, spleen, intestine, kidney, adrenal gland, muscle and testis. Expressed on endothelial cells, platelets, undifferentiated monocytes and circulating natural killer cells.

Its subcellular location is the cell membrane. Cell surface receptor that plays a role in various physiological processes including inflammation, phagocytosis, and cell adhesion. Plays a role in phagocytosis and enhances the uptake of apoptotic cells and immune complexes by acting as a receptor for defense collagens including surfactant protein A/SFTPA1, C1q, and mannose-binding lectin (MBL2). Plays a role in the regulation of endothelial cell function and adhesion by activating angiogenesis. Mechanistically, exerts its angiogenic function by associating with beta-dystroglycan, leading to SRC-dependent phosphorylation and subsequent recruitment of CBL. In turn, CBL provides a docking site for downstream signaling components, such as CRKL to enhance cell migration. Participates in angiogenesis also by acting as a receptor for the ECM pan-endothelial glycoprotein multimerin-2/MMRN2 and IGFBP7 ligands. Both ligands play a non-redundant role in CD93-mediated endothelial cell function. Acts as a key regulator of endothelial barrier function through modulating VEGFR2 function. In Rattus norvegicus (Rat), this protein is Complement component C1q receptor (Cd93).